Here is a 427-residue protein sequence, read N- to C-terminus: Chitin disaccharide deacetylase (427 aa).

Residues 1 to 22 (MKLNKLAIATLVSAALSQYAFA) form the signal peptide. A NodB homology domain is found at 28–326 (GTIYLTFDDG…LAKQAGYVFD (299 aa)). 2 Chitin-binding type-3 domains span residues 333–375 (PNWQ…SSLW) and 382–419 (TNWTQNVSYKQGDVVTYQGLRYLVNVPHVSQADWTPNS).

Belongs to the polysaccharide deacetylase family. Carbohydrate-binding module 12 subfamily.

The catalysed reaction is N,N'-diacetylchitobiose + H2O = N-acetyl-beta-D-glucosaminyl-(1-&gt;4)-D-glucosamine + acetate. It functions in the pathway glycan degradation; chitin degradation. Functionally, specifically catalyzes the degradation of N,N'-diacetylchitobiose. Key enzyme in the chitin catabolic cascade. The polypeptide is Chitin disaccharide deacetylase (deaA) (Vibrio alginolyticus).